The following is a 737-amino-acid chain: Elongation factor 2 (737 aa).

The 245-residue stretch at 18–262 folds into the tr-type G domain; the sequence is TRVRNIGIIA…AVIKFVPNPR (245 aa). GTP is bound by residues 27–34, 93–97, and 147–150; these read AHVDHGKT, DTPGH, and NKVD. H604 bears the Diphthamide mark.

It belongs to the TRAFAC class translation factor GTPase superfamily. Classic translation factor GTPase family. EF-G/EF-2 subfamily.

The protein localises to the cytoplasm. Catalyzes the GTP-dependent ribosomal translocation step during translation elongation. During this step, the ribosome changes from the pre-translocational (PRE) to the post-translocational (POST) state as the newly formed A-site-bound peptidyl-tRNA and P-site-bound deacylated tRNA move to the P and E sites, respectively. Catalyzes the coordinated movement of the two tRNA molecules, the mRNA and conformational changes in the ribosome. In Sulfolobus acidocaldarius (strain ATCC 33909 / DSM 639 / JCM 8929 / NBRC 15157 / NCIMB 11770), this protein is Elongation factor 2 (fusA).